Reading from the N-terminus, the 245-residue chain is NAD(P)H-quinone oxidoreductase subunit K (245 aa).

4 residues coordinate [4Fe-4S] cluster: C58, C59, C123, and C154.

The protein belongs to the complex I 20 kDa subunit family. NDH-1 can be composed of about 15 different subunits; different subcomplexes with different compositions have been identified which probably have different functions. Requires [4Fe-4S] cluster as cofactor.

The protein localises to the cellular thylakoid membrane. It carries out the reaction a plastoquinone + NADH + (n+1) H(+)(in) = a plastoquinol + NAD(+) + n H(+)(out). It catalyses the reaction a plastoquinone + NADPH + (n+1) H(+)(in) = a plastoquinol + NADP(+) + n H(+)(out). In terms of biological role, NDH-1 shuttles electrons from an unknown electron donor, via FMN and iron-sulfur (Fe-S) centers, to quinones in the respiratory and/or the photosynthetic chain. The immediate electron acceptor for the enzyme in this species is believed to be plastoquinone. Couples the redox reaction to proton translocation, and thus conserves the redox energy in a proton gradient. Cyanobacterial NDH-1 also plays a role in inorganic carbon-concentration. This Nostoc sp. (strain PCC 7120 / SAG 25.82 / UTEX 2576) protein is NAD(P)H-quinone oxidoreductase subunit K.